The following is a 324-amino-acid chain: Acetyl-coenzyme A carboxylase carboxyl transferase subunit alpha (324 aa).

Positions 37-291 (ILEDKLENLE…DLMIRKTFEQ (255 aa)) constitute a CoA carboxyltransferase C-terminal domain.

The protein belongs to the AccA family. In terms of assembly, acetyl-CoA carboxylase is a heterohexamer composed of biotin carboxyl carrier protein (AccB), biotin carboxylase (AccC) and two subunits each of ACCase subunit alpha (AccA) and ACCase subunit beta (AccD).

The protein resides in the cytoplasm. The enzyme catalyses N(6)-carboxybiotinyl-L-lysyl-[protein] + acetyl-CoA = N(6)-biotinyl-L-lysyl-[protein] + malonyl-CoA. The protein operates within lipid metabolism; malonyl-CoA biosynthesis; malonyl-CoA from acetyl-CoA: step 1/1. In terms of biological role, component of the acetyl coenzyme A carboxylase (ACC) complex. First, biotin carboxylase catalyzes the carboxylation of biotin on its carrier protein (BCCP) and then the CO(2) group is transferred by the carboxyltransferase to acetyl-CoA to form malonyl-CoA. This is Acetyl-coenzyme A carboxylase carboxyl transferase subunit alpha from Bacillus cereus (strain G9842).